A 227-amino-acid chain; its full sequence is Small ribosomal subunit protein uS3 (227 aa).

Positions 39 to 107 (VREFLMKKLE…PVHINIEEIR (69 aa)) constitute a KH type-2 domain.

Belongs to the universal ribosomal protein uS3 family. Part of the 30S ribosomal subunit. Forms a tight complex with proteins S10 and S14.

Binds the lower part of the 30S subunit head. Binds mRNA in the 70S ribosome, positioning it for translation. The sequence is that of Small ribosomal subunit protein uS3 from Hahella chejuensis (strain KCTC 2396).